Reading from the N-terminus, the 156-residue chain is Peptide deformylase 1 (156 aa).

Fe cation-binding residues include Cys90 and His132. The active site involves Glu133. His136 contacts Fe cation.

This sequence belongs to the polypeptide deformylase family. It depends on Fe(2+) as a cofactor.

It catalyses the reaction N-terminal N-formyl-L-methionyl-[peptide] + H2O = N-terminal L-methionyl-[peptide] + formate. Functionally, removes the formyl group from the N-terminal Met of newly synthesized proteins. Requires at least a dipeptide for an efficient rate of reaction. N-terminal L-methionine is a prerequisite for activity but the enzyme has broad specificity at other positions. The protein is Peptide deformylase 1 of Bacillus anthracis.